The primary structure comprises 181 residues: Oligoribonuclease (181 aa).

The Exonuclease domain occupies 8–171 (LVWIDMEMTG…DDIRESIAEL (164 aa)). Tyr129 is a catalytic residue.

This sequence belongs to the oligoribonuclease family.

The protein localises to the cytoplasm. In terms of biological role, 3'-to-5' exoribonuclease specific for small oligoribonucleotides. The chain is Oligoribonuclease from Pseudoalteromonas atlantica (strain T6c / ATCC BAA-1087).